Reading from the N-terminus, the 438-residue chain is 3-phosphoshikimate 1-carboxyvinyltransferase (438 aa).

The 3-phosphoshikimate site is built by Lys21, Ser22, and Arg26. Position 21 (Lys21) interacts with phosphoenolpyruvate. Phosphoenolpyruvate is bound by residues Gly95 and Arg123. 3-phosphoshikimate-binding residues include Ser167, Gln169, Asp315, and Lys342. Gln169 provides a ligand contact to phosphoenolpyruvate. Asp315 serves as the catalytic Proton acceptor. 2 residues coordinate phosphoenolpyruvate: Arg346 and Arg387.

This sequence belongs to the EPSP synthase family. Monomer.

The protein resides in the cytoplasm. The enzyme catalyses 3-phosphoshikimate + phosphoenolpyruvate = 5-O-(1-carboxyvinyl)-3-phosphoshikimate + phosphate. Its pathway is metabolic intermediate biosynthesis; chorismate biosynthesis; chorismate from D-erythrose 4-phosphate and phosphoenolpyruvate: step 6/7. Catalyzes the transfer of the enolpyruvyl moiety of phosphoenolpyruvate (PEP) to the 5-hydroxyl of shikimate-3-phosphate (S3P) to produce enolpyruvyl shikimate-3-phosphate and inorganic phosphate. The protein is 3-phosphoshikimate 1-carboxyvinyltransferase of Coxiella burnetii (strain CbuK_Q154) (Coxiella burnetii (strain Q154)).